The following is a 300-amino-acid chain: tRNA pseudouridine synthase B (300 aa).

Residue Asp38 is the Nucleophile of the active site.

This sequence belongs to the pseudouridine synthase TruB family. Type 1 subfamily.

It carries out the reaction uridine(55) in tRNA = pseudouridine(55) in tRNA. Its function is as follows. Responsible for synthesis of pseudouridine from uracil-55 in the psi GC loop of transfer RNAs. This Anaplasma phagocytophilum (strain HZ) protein is tRNA pseudouridine synthase B.